Consider the following 549-residue polypeptide: MKDINPSHTAAWKALQQHFATMKDVQISDLFAQEPERFSSFSATFNDQMLVDYSKNRITAETLTRLLALAEECGVKEAIAAMFSGEKINRTEDRAVLHVALRNRSNTPINVDDKDVMPDVNAVLVKMKQFCDRVIGGEWKGYTGRIITDIVNIGIGGSDLGPYMVTEALRPYKNHLNMHYVSNVDGTHIAETIKDLDPATTLFLVASKTFTTQETMTNAHSARDWFLKTAGDEQHVARHFAALSTNAKAVAEFGIDTENMFEFWDWVGGRYSLWSAIGLSIALSLGFDNFEKLLSGAHAMDHHFVSTPLDKNLPVLLALIGIWYNNFFGMETEAILPYDQYMHRFAAYFQQGNMESNGKYVDREGHPVSYQTGPIIWGEPGTNGQHSFYQLIHQGTKIVPCDFIAPAISHNPLTDHHAKLLSNFFAQTEALAFGKSREAVEQEFSAAGKSPDQVQHVAPFKVFEGNRPTNSILLREITPYSLGALIALYEHKIFTQGAILNIYTFDQWGVELGKQLANRILPELAQDNPIDAHDSSTNGLINRYKSWRH.

E355 functions as the Proton donor in the catalytic mechanism. Residues H386 and K514 contribute to the active site.

Belongs to the GPI family.

It is found in the cytoplasm. The enzyme catalyses alpha-D-glucose 6-phosphate = beta-D-fructose 6-phosphate. It participates in carbohydrate biosynthesis; gluconeogenesis. The protein operates within carbohydrate degradation; glycolysis; D-glyceraldehyde 3-phosphate and glycerone phosphate from D-glucose: step 2/4. In terms of biological role, catalyzes the reversible isomerization of glucose-6-phosphate to fructose-6-phosphate. The protein is Glucose-6-phosphate isomerase of Sodalis glossinidius (strain morsitans).